The primary structure comprises 155 residues: Small ribosomal subunit protein uS7cz/uS7cy (155 aa).

Component of the chloroplast small ribosomal subunit (SSU). Mature 70S chloroplast ribosomes of higher plants consist of a small (30S) and a large (50S) subunit. The 30S small subunit contains 1 molecule of ribosomal RNA (16S rRNA) and 24 different proteins. The 50S large subunit contains 3 rRNA molecules (23S, 5S and 4.5S rRNA) and 33 different proteins.

The protein resides in the plastid. Its subcellular location is the chloroplast. Component of the chloroplast ribosome (chloro-ribosome), a dedicated translation machinery responsible for the synthesis of chloroplast genome-encoded proteins, including proteins of the transcription and translation machinery and components of the photosynthetic apparatus. The chain is Small ribosomal subunit protein uS7cz/uS7cy (rps7-A) from Spinacia oleracea (Spinach).